The sequence spans 471 residues: Argininosuccinate lyase (471 aa).

Belongs to the lyase 1 family. Argininosuccinate lyase subfamily.

Its subcellular location is the cytoplasm. It carries out the reaction 2-(N(omega)-L-arginino)succinate = fumarate + L-arginine. It functions in the pathway amino-acid biosynthesis; L-arginine biosynthesis; L-arginine from L-ornithine and carbamoyl phosphate: step 3/3. The chain is Argininosuccinate lyase from Deinococcus radiodurans (strain ATCC 13939 / DSM 20539 / JCM 16871 / CCUG 27074 / LMG 4051 / NBRC 15346 / NCIMB 9279 / VKM B-1422 / R1).